Consider the following 430-residue polypeptide: Adenylosuccinate synthetase (430 aa).

Residues Gly-12–Lys-18 and Gly-40–Thr-42 each bind GTP. Residue Asp-13 is the Proton acceptor of the active site. Residues Asp-13 and Gly-40 each contribute to the Mg(2+) site. IMP-binding positions include Asp-13–Lys-16, Asn-38–His-41, Thr-128, Arg-142, Gln-223, Thr-238, and Arg-302. His-41 (proton donor) is an active-site residue. Residue Thr-298 to Arg-304 participates in substrate binding. Residues Arg-304, Leu-330 to Asp-332, and Ser-412 to Gly-414 contribute to the GTP site.

This sequence belongs to the adenylosuccinate synthetase family. Homodimer. Mg(2+) serves as cofactor.

The protein resides in the cytoplasm. The catalysed reaction is IMP + L-aspartate + GTP = N(6)-(1,2-dicarboxyethyl)-AMP + GDP + phosphate + 2 H(+). It participates in purine metabolism; AMP biosynthesis via de novo pathway; AMP from IMP: step 1/2. Functionally, plays an important role in the de novo pathway of purine nucleotide biosynthesis. Catalyzes the first committed step in the biosynthesis of AMP from IMP. In Listeria welshimeri serovar 6b (strain ATCC 35897 / DSM 20650 / CCUG 15529 / CIP 8149 / NCTC 11857 / SLCC 5334 / V8), this protein is Adenylosuccinate synthetase.